Consider the following 388-residue polypeptide: Large ribosomal subunit protein uL3A (388 aa).

Basic and acidic residues predominate over residues 1 to 10; the sequence is MSHCKFEQPR. The segment at 1-34 is disordered; sequence MSHCKFEQPRHGSLGFLPRKRASRQRGKVKAFPK. Ser-13 carries the post-translational modification Phosphoserine. Positions 18–31 are enriched in basic residues; it reads PRKRASRQRGKVKA. Phosphoserine occurs at positions 65, 140, 143, 207, 295, and 355. Thr-372 bears the Phosphothreonine mark.

The protein belongs to the universal ribosomal protein uL3 family. Component of the large ribosomal subunit (LSU). Mature yeast ribosomes consist of a small (40S) and a large (60S) subunit. The 40S small subunit contains 1 molecule of ribosomal RNA (18S rRNA) and at least 33 different proteins. The large 60S subunit contains 3 rRNA molecules (25S, 5.8S and 5S rRNA) and at least 46 different proteins. uL3 forms together with ES39L one of the contact sites for the signal recognition particle that targets ribosomes to the endoplasmic reticulum membrane.

The protein resides in the cytoplasm. Component of the ribosome, a large ribonucleoprotein complex responsible for the synthesis of proteins in the cell. The small ribosomal subunit (SSU) binds messenger RNAs (mRNAs) and translates the encoded message by selecting cognate aminoacyl-transfer RNA (tRNA) molecules. The large subunit (LSU) contains the ribosomal catalytic site termed the peptidyl transferase center (PTC), which catalyzes the formation of peptide bonds, thereby polymerizing the amino acids delivered by tRNAs into a polypeptide chain. The nascent polypeptides leave the ribosome through a tunnel in the LSU and interact with protein factors that function in enzymatic processing, targeting, and the membrane insertion of nascent chains at the exit of the ribosomal tunnel. uL3 plays a role in coordinating processes of accommodating the aminoacyl-tRNA in the PTC. The chain is Large ribosomal subunit protein uL3A (rpl301) from Schizosaccharomyces pombe (strain 972 / ATCC 24843) (Fission yeast).